Consider the following 137-residue polypeptide: Small ribosomal subunit protein uS9 (137 aa).

The interval 118–137 (KERKKYGLRKARKAPQYSKR) is disordered.

The protein belongs to the universal ribosomal protein uS9 family.

The protein is Small ribosomal subunit protein uS9 of Acaryochloris marina (strain MBIC 11017).